The sequence spans 140 residues: Nucleoside diphosphate kinase (140 aa).

Positions 9, 57, 85, 91, 102, and 112 each coordinate ATP. The active-site Pros-phosphohistidine intermediate is H115.

Belongs to the NDK family. In terms of assembly, homotetramer. Requires Mg(2+) as cofactor.

The protein localises to the cytoplasm. The catalysed reaction is a 2'-deoxyribonucleoside 5'-diphosphate + ATP = a 2'-deoxyribonucleoside 5'-triphosphate + ADP. It catalyses the reaction a ribonucleoside 5'-diphosphate + ATP = a ribonucleoside 5'-triphosphate + ADP. In terms of biological role, major role in the synthesis of nucleoside triphosphates other than ATP. The ATP gamma phosphate is transferred to the NDP beta phosphate via a ping-pong mechanism, using a phosphorylated active-site intermediate. In Chlorobaculum tepidum (strain ATCC 49652 / DSM 12025 / NBRC 103806 / TLS) (Chlorobium tepidum), this protein is Nucleoside diphosphate kinase.